A 1068-amino-acid polypeptide reads, in one-letter code: Probable ATPase FE772_23070 (1068 aa).

217 to 224 provides a ligand contact to ATP; the sequence is GGGGAGKT.

In terms of biological role, involved in defense against bacteriophages. When this probable 4 gene operon (bGSDM-FE772_23060-FE772_23065-FE772_23070) is inserted into E.coli it provides nearly 100-fold protection against phages T5 and T6 and about 8-fold against phage T4. The operon without bGSDM no longer protects against phage. Probably a nucleotide hydrolase, possibly of ATP. This Lysobacter enzymogenes protein is Probable ATPase FE772_23070.